We begin with the raw amino-acid sequence, 236 residues long: Biosynthetic peptidoglycan transglycosylase (236 aa).

Residues 12-31 (ALLWFAASSIVLVLVFRWVP) form a helical membrane-spanning segment.

This sequence belongs to the glycosyltransferase 51 family.

Its subcellular location is the cell inner membrane. It carries out the reaction [GlcNAc-(1-&gt;4)-Mur2Ac(oyl-L-Ala-gamma-D-Glu-L-Lys-D-Ala-D-Ala)](n)-di-trans,octa-cis-undecaprenyl diphosphate + beta-D-GlcNAc-(1-&gt;4)-Mur2Ac(oyl-L-Ala-gamma-D-Glu-L-Lys-D-Ala-D-Ala)-di-trans,octa-cis-undecaprenyl diphosphate = [GlcNAc-(1-&gt;4)-Mur2Ac(oyl-L-Ala-gamma-D-Glu-L-Lys-D-Ala-D-Ala)](n+1)-di-trans,octa-cis-undecaprenyl diphosphate + di-trans,octa-cis-undecaprenyl diphosphate + H(+). Its pathway is cell wall biogenesis; peptidoglycan biosynthesis. Its function is as follows. Peptidoglycan polymerase that catalyzes glycan chain elongation from lipid-linked precursors. The sequence is that of Biosynthetic peptidoglycan transglycosylase from Pseudomonas putida (strain GB-1).